A 416-amino-acid chain; its full sequence is uncharacterized protein (416 aa).

Positions 29, 31, 144, 215, and 236 each coordinate Zn(2+).

This sequence belongs to the metallo-dependent hydrolases superfamily. Peptidase M19 family. Zn(2+) serves as cofactor.

It carries out the reaction an L-aminoacyl-L-amino acid + H2O = 2 an L-alpha-amino acid. This is an uncharacterized protein from Schizosaccharomyces pombe (strain 972 / ATCC 24843) (Fission yeast).